The chain runs to 237 residues: MNNFSKNLEECFQKYGYENFTLLLAGYIAKYPKYEEISNNTKFLNEYHNEVSNITTCLHVYKNLAEGVKRDFNLDLLYLNDYEIKKVKSMVEPNVISDAITVVTLVNDYNNLIDAARNVKKGDKESYTKFYIALGIVVFDVILIKENVAYKVSYKLVGILISKTGFYKVIYKYGGSTALKPIESCTHWISRGEINSMPSKLYNNSDKLTNISIKINTSKLYNKSINTIRSKIMEVSS.

This is an uncharacterized protein from Methanocaldococcus jannaschii (strain ATCC 43067 / DSM 2661 / JAL-1 / JCM 10045 / NBRC 100440) (Methanococcus jannaschii).